The chain runs to 78 residues: Large ribosomal subunit protein bL28 (78 aa).

The disordered stretch occupies residues 1–21 (MSRVCQVTGKKPMVGNNRSHA).

Belongs to the bacterial ribosomal protein bL28 family.

The protein is Large ribosomal subunit protein bL28 of Shewanella woodyi (strain ATCC 51908 / MS32).